We begin with the raw amino-acid sequence, 73 residues long: uncharacterized protein (73 aa).

This is an uncharacterized protein from Caprine arthritis encephalitis virus (CAEV).